A 118-amino-acid polypeptide reads, in one-letter code: MATPSLRGRLARFGNPRKPVLKPNKPLILANRVGERRREKGEATCITEMSVMMACWKQNEFRDDACRKEIQGFLDCAARAQEARKMRSIQETLGESGSLLPNKLNKLLQRFPNKPYLS.

A CHCH domain is found at 42–84; that stretch reads EATCITEMSVMMACWKQNEFRDDACRKEIQGFLDCAARAQEAR. 2 consecutive short sequence motifs (cx9C motif) follow at residues 45-55 and 66-76; these read CITEMSVMMAC and CRKEIQGFLDC. Cystine bridges form between C45-C76 and C55-C66.

Belongs to the mitochondrion-specific ribosomal protein mS37 family. In terms of assembly, component of the mitochondrial small ribosomal subunit (mt-SSU). Mature mammalian 55S mitochondrial ribosomes consist of a small (28S) and a large (39S) subunit. The 28S small subunit contains a 12S ribosomal RNA (12S mt-rRNA) and 30 different proteins. The 39S large subunit contains a 16S rRNA (16S mt-rRNA), a copy of mitochondrial valine transfer RNA (mt-tRNA(Val)), which plays an integral structural role, and 52 different proteins.

Its subcellular location is the mitochondrion. It localises to the nucleus. The polypeptide is Small ribosomal subunit protein mS37 (CHCHD1) (Homo sapiens (Human)).